The following is a 318-amino-acid chain: NADH-ubiquinone oxidoreductase chain 1 (318 aa).

The next 8 membrane-spanning stretches (helical) occupy residues 2-22, 68-88, 100-120, 147-167, 172-192, 217-237, 253-273, and 294-314; these read FMIN…FLTL, ISMF…MWIP, LGVL…LWSG, AIIL…TLII, VWLI…TLAE, AGPF…MNIF, ELYT…FLWI, and LPLT…LSSI.

This sequence belongs to the complex I subunit 1 family.

The protein resides in the mitochondrion inner membrane. The enzyme catalyses a ubiquinone + NADH + 5 H(+)(in) = a ubiquinol + NAD(+) + 4 H(+)(out). In terms of biological role, core subunit of the mitochondrial membrane respiratory chain NADH dehydrogenase (Complex I) that is believed to belong to the minimal assembly required for catalysis. Complex I functions in the transfer of electrons from NADH to the respiratory chain. The immediate electron acceptor for the enzyme is believed to be ubiquinone. In Ovis aries (Sheep), this protein is NADH-ubiquinone oxidoreductase chain 1 (MT-ND1).